Here is a 68-residue protein sequence, read N- to C-terminus: Erythrodihydroneopterin triphosphate synthetase (68 aa).

At S66 the chain carries Phosphoserine.

This Cavia porcellus (Guinea pig) protein is Erythrodihydroneopterin triphosphate synthetase.